Reading from the N-terminus, the 304-residue chain is Sulfate adenylyltransferase subunit 2 (304 aa).

This sequence belongs to the PAPS reductase family. CysD subfamily. Heterodimer composed of CysD, the smaller subunit, and CysNC.

It carries out the reaction sulfate + ATP + H(+) = adenosine 5'-phosphosulfate + diphosphate. It participates in sulfur metabolism; hydrogen sulfide biosynthesis; sulfite from sulfate: step 1/3. With CysN forms the ATP sulfurylase (ATPS) that catalyzes the adenylation of sulfate producing adenosine 5'-phosphosulfate (APS) and diphosphate, the first enzymatic step in sulfur assimilation pathway. APS synthesis involves the formation of a high-energy phosphoric-sulfuric acid anhydride bond driven by GTP hydrolysis by CysN coupled to ATP hydrolysis by CysD. This Xylella fastidiosa (strain Temecula1 / ATCC 700964) protein is Sulfate adenylyltransferase subunit 2.